We begin with the raw amino-acid sequence, 612 residues long: Dihydroxy-acid dehydratase (612 aa).

Position 81 (aspartate 81) interacts with Mg(2+). Position 122 (cysteine 122) interacts with [2Fe-2S] cluster. 2 residues coordinate Mg(2+): aspartate 123 and lysine 124. Lysine 124 is subject to N6-carboxylysine. Position 193 (cysteine 193) interacts with [2Fe-2S] cluster. A Mg(2+)-binding site is contributed by glutamate 489. Catalysis depends on serine 515, which acts as the Proton acceptor.

Belongs to the IlvD/Edd family. As to quaternary structure, homodimer. The cofactor is [2Fe-2S] cluster. Mg(2+) serves as cofactor.

The enzyme catalyses (2R)-2,3-dihydroxy-3-methylbutanoate = 3-methyl-2-oxobutanoate + H2O. It carries out the reaction (2R,3R)-2,3-dihydroxy-3-methylpentanoate = (S)-3-methyl-2-oxopentanoate + H2O. It participates in amino-acid biosynthesis; L-isoleucine biosynthesis; L-isoleucine from 2-oxobutanoate: step 3/4. It functions in the pathway amino-acid biosynthesis; L-valine biosynthesis; L-valine from pyruvate: step 3/4. Functions in the biosynthesis of branched-chain amino acids. Catalyzes the dehydration of (2R,3R)-2,3-dihydroxy-3-methylpentanoate (2,3-dihydroxy-3-methylvalerate) into 2-oxo-3-methylpentanoate (2-oxo-3-methylvalerate) and of (2R)-2,3-dihydroxy-3-methylbutanoate (2,3-dihydroxyisovalerate) into 2-oxo-3-methylbutanoate (2-oxoisovalerate), the penultimate precursor to L-isoleucine and L-valine, respectively. This chain is Dihydroxy-acid dehydratase, found in Stenotrophomonas maltophilia (strain K279a).